Consider the following 376-residue polypeptide: NIF3-like protein 1 (376 aa).

Lys-108 carries the N6-acetyllysine modification. Residues 243-376 (LLLHTGMGRL…ETDRDPLRVV (134 aa)) form a mediates interaction with COPS2 region. Residue Thr-254 is modified to Phosphothreonine. The residue at position 258 (Ser-258) is a Phosphoserine.

This sequence belongs to the GTP cyclohydrolase I type 2/NIF3 family. As to quaternary structure, homodimer. Interacts with COPS2. Interacts with THOC7. As to expression, ubiquitous. Detected in all tissues tested with higher expression in cerebellum, heart and kidney and to a lower level in cerebrum, lung, liver, spleen and muscle.

It is found in the cytoplasm. The protein localises to the nucleus. Its function is as follows. May function as a transcriptional corepressor through its interaction with COPS2, negatively regulating the expression of genes involved in neuronal differentiation. In Mus musculus (Mouse), this protein is NIF3-like protein 1.